A 652-amino-acid chain; its full sequence is uncharacterized protein (652 aa).

Basic and acidic residues-rich tracts occupy residues 1–13 (MSVTESKAKTERK) and 641–652 (ATERTDNLADAA). 2 disordered regions span residues 1-21 (MSVTESKAKTERKSSRKPAKT) and 628-652 (VPGWMCAPRPQTDATERTDNLADAA).

The protein belongs to the ParB family.

This is an uncharacterized protein from Escherichia coli O157:H7.